We begin with the raw amino-acid sequence, 160 residues long: Cytochrome b6-f complex subunit 4 (160 aa).

Transmembrane regions (helical) follow at residues 36 to 56, 95 to 115, and 128 to 148; these read LLYI…GLAV, LLGI…PFIE, and VAMT…IGAA.

The protein belongs to the cytochrome b family. PetD subfamily. In terms of assembly, the 4 large subunits of the cytochrome b6-f complex are cytochrome b6, subunit IV (17 kDa polypeptide, PetD), cytochrome f and the Rieske protein, while the 4 small subunits are PetG, PetL, PetM and PetN. The complex functions as a dimer.

It is found in the cellular thylakoid membrane. Its function is as follows. Component of the cytochrome b6-f complex, which mediates electron transfer between photosystem II (PSII) and photosystem I (PSI), cyclic electron flow around PSI, and state transitions. This is Cytochrome b6-f complex subunit 4 from Synechococcus sp. (strain CC9902).